Here is a 255-residue protein sequence, read N- to C-terminus: Triosephosphate isomerase (255 aa).

Residue 9–11 (NWK) participates in substrate binding. Histidine 95 serves as the catalytic Electrophile. Glutamate 167 (proton acceptor) is an active-site residue. Substrate contacts are provided by residues glycine 173, serine 212, and 233-234 (GG).

Belongs to the triosephosphate isomerase family. As to quaternary structure, homodimer.

It localises to the cytoplasm. It catalyses the reaction D-glyceraldehyde 3-phosphate = dihydroxyacetone phosphate. It participates in carbohydrate biosynthesis; gluconeogenesis. It functions in the pathway carbohydrate degradation; glycolysis; D-glyceraldehyde 3-phosphate from glycerone phosphate: step 1/1. Its function is as follows. Involved in the gluconeogenesis. Catalyzes stereospecifically the conversion of dihydroxyacetone phosphate (DHAP) to D-glyceraldehyde-3-phosphate (G3P). This Sodalis glossinidius (strain morsitans) protein is Triosephosphate isomerase.